Consider the following 261-residue polypeptide: Pyridoxine-5'-phosphate oxidase (261 aa).

Pyridoxal 5'-phosphate is bound at residue 42-45 (RGDR). 95-98 (RMLL) is an FMN binding site. Lysine 100 serves as a coordination point for pyridoxal 5'-phosphate. FMN-binding positions include 110–111 (FT), 116–117 (RK), and glutamine 139. Tyrosine 157, arginine 161, and serine 165 together coordinate pyridoxal 5'-phosphate. Residues 174–175 (QS) and tryptophan 219 contribute to the FMN site. 225–227 (RLH) lines the pyridoxal 5'-phosphate pocket. An FMN-binding site is contributed by arginine 229. Threonine 238 carries the post-translational modification Phosphothreonine. Serine 241 is modified (phosphoserine).

This sequence belongs to the pyridoxamine 5'-phosphate oxidase family. In terms of assembly, homodimer. Requires FMN as cofactor. Ubiquitous. Expressed in liver, brain, lung, prostate and stomach (at protein level).

The catalysed reaction is pyridoxine 5'-phosphate + O2 = pyridoxal 5'-phosphate + H2O2. The enzyme catalyses pyridoxamine 5'-phosphate + O2 + H2O = pyridoxal 5'-phosphate + H2O2 + NH4(+). The protein operates within cofactor metabolism; pyridoxal 5'-phosphate salvage; pyridoxal 5'-phosphate from pyridoxamine 5'-phosphate: step 1/1. Its pathway is cofactor metabolism; pyridoxal 5'-phosphate salvage; pyridoxal 5'-phosphate from pyridoxine 5'-phosphate: step 1/1. Functionally, catalyzes the oxidation of either pyridoxine 5'-phosphate (PNP) or pyridoxamine 5'-phosphate (PMP) into pyridoxal 5'-phosphate (PLP). This Homo sapiens (Human) protein is Pyridoxine-5'-phosphate oxidase (PNPO).